Here is an 82-residue protein sequence, read N- to C-terminus: UPF0437 protein in nifX-nifW intergenic region (82 aa).

Belongs to the UPF0437 family.

The polypeptide is UPF0437 protein in nifX-nifW intergenic region (Frankia alni).